We begin with the raw amino-acid sequence, 303 residues long: Regulatory protein PocR (303 aa).

Positions 195–293 (KKALRYIDAH…QVTPQAYRQQ (99 aa)) constitute an HTH araC/xylS-type domain. 2 DNA-binding regions (H-T-H motif) span residues 212 to 233 (EDVA…KKYQ) and 260 to 283 (IASI…RQTY).

The protein operates within cofactor biosynthesis; adenosylcobalamin biosynthesis [regulation]. Its pathway is polyol metabolism; 1,2-propanediol degradation [regulation]. In terms of biological role, positive regulatory protein of pdu and cob operons. Positively autoregulates its own expression. This is Regulatory protein PocR (pocR) from Salmonella typhimurium (strain LT2 / SGSC1412 / ATCC 700720).